A 23-amino-acid polypeptide reads, in one-letter code: Gastrin-releasing peptide (23 aa).

Met23 is modified (methionine amide).

This sequence belongs to the bombesin/neuromedin-B/ranatensin family.

The protein localises to the secreted. It is found in the cytoplasmic vesicle. The protein resides in the secretory vesicle lumen. Its function is as follows. Stimulates the release of gastrin and other gastrointestinal hormones. This is Gastrin-releasing peptide (grp) from Oncorhynchus mykiss (Rainbow trout).